Consider the following 490-residue polypeptide: N-succinylglutamate 5-semialdehyde dehydrogenase (490 aa).

Residue 223–228 (GSAGTG) coordinates NAD(+). Residues glutamate 246 and cysteine 280 contribute to the active site.

Belongs to the aldehyde dehydrogenase family. AstD subfamily.

The enzyme catalyses N-succinyl-L-glutamate 5-semialdehyde + NAD(+) + H2O = N-succinyl-L-glutamate + NADH + 2 H(+). It participates in amino-acid degradation; L-arginine degradation via AST pathway; L-glutamate and succinate from L-arginine: step 4/5. Its function is as follows. Catalyzes the NAD-dependent reduction of succinylglutamate semialdehyde into succinylglutamate. The sequence is that of N-succinylglutamate 5-semialdehyde dehydrogenase from Serratia proteamaculans (strain 568).